A 222-amino-acid chain; its full sequence is Cytidylate kinase (222 aa).

10 to 18 (GPSASGKGT) is a binding site for ATP.

The protein belongs to the cytidylate kinase family. Type 1 subfamily.

Its subcellular location is the cytoplasm. The catalysed reaction is CMP + ATP = CDP + ADP. It catalyses the reaction dCMP + ATP = dCDP + ADP. The protein is Cytidylate kinase of Chromobacterium violaceum (strain ATCC 12472 / DSM 30191 / JCM 1249 / CCUG 213 / NBRC 12614 / NCIMB 9131 / NCTC 9757 / MK).